The chain runs to 432 residues: Glutamate-1-semialdehyde 2,1-aminomutase 1 (432 aa).

N6-(pyridoxal phosphate)lysine is present on Lys268.

Belongs to the class-III pyridoxal-phosphate-dependent aminotransferase family. HemL subfamily. As to quaternary structure, homodimer. It depends on pyridoxal 5'-phosphate as a cofactor.

The protein localises to the cytoplasm. It catalyses the reaction (S)-4-amino-5-oxopentanoate = 5-aminolevulinate. It functions in the pathway porphyrin-containing compound metabolism; protoporphyrin-IX biosynthesis; 5-aminolevulinate from L-glutamyl-tRNA(Glu): step 2/2. This chain is Glutamate-1-semialdehyde 2,1-aminomutase 1, found in Bacillus licheniformis (strain ATCC 14580 / DSM 13 / JCM 2505 / CCUG 7422 / NBRC 12200 / NCIMB 9375 / NCTC 10341 / NRRL NRS-1264 / Gibson 46).